The following is a 279-amino-acid chain: Small ribosomal subunit protein uS2 (279 aa).

Residues 232-279 (RRRGTDEKPEAGVASDEPLAEWERELLEEPKKSDEPKSDEQPAAAAAE) form a disordered region. A compositionally biased stretch (basic and acidic residues) spans 252-271 (EWERELLEEPKKSDEPKSDE).

This sequence belongs to the universal ribosomal protein uS2 family.

This is Small ribosomal subunit protein uS2 from Salinispora arenicola (strain CNS-205).